The following is a 965-amino-acid chain: Chondroitin synthase (965 aa).

A galactosaminyltransferase; A1 domain region spans residues 132-418; the sequence is FTWYKNRKKS…IVKEKVPYIY (287 aa). UDP-N-acetyl-alpha-D-galactosamine is bound by residues Pro-158, Arg-162, Asp-189, Tyr-218, Arg-224, and 240 to 241; that span reads DC. Position 242 (Asp-242) interacts with Mn(2+). A UDP-N-acetyl-alpha-D-galactosamine-binding site is contributed by 362 to 363; the sequence is ED. His-387 lines the Mn(2+) pocket. The segment at 419–683 is glucuronosyltransferase; A2 domain; the sequence is RKLLPIEDSH…ESRKYIFNKT (265 aa). Residues Tyr-442, Asp-470, and 518–521 each bind UDP-alpha-D-glucuronate; that span reads QLDS. Asp-522 provides a ligand contact to Mn(2+). UDP-alpha-D-glucuronate-binding positions include His-582 and 604–605; that span reads AV. His-632 contributes to the Mn(2+) binding site.

The protein belongs to the glycosyltransferase 2 family. CS/HAS subfamily. It depends on Mn(2+) as a cofactor.

The protein resides in the cell membrane. It carries out the reaction 3-O-(beta-D-GlcA-(1-&gt;3)-beta-D-GalNAc-(1-&gt;4)-beta-D-GlcA-(1-&gt;3)-beta-D-Gal-(1-&gt;3)-beta-D-Gal-(1-&gt;4)-beta-D-Xyl)-L-seryl-[protein] + UDP-N-acetyl-alpha-D-galactosamine = 3-O-(beta-D-GalNAc-(1-&gt;4)-beta-D-GlcA-(1-&gt;3)-beta-D-GalNAc-(1-&gt;4)-beta-D-GlcA-(1-&gt;3)-beta-D-Gal-(1-&gt;3)-beta-D-Gal-(1-&gt;4)-beta-D-Xyl)-L-seryl-[protein] + UDP + H(+). The enzyme catalyses 3-O-{beta-D-GlcA-(1-&gt;3)-[beta-D-GalNAc-(1-&gt;4)-beta-D-GlcA-(1-&gt;3)](n)-beta-D-GalNAc-(1-&gt;4)-beta-D-GlcA-(1-&gt;3)-beta-D-Gal-(1-&gt;3)-beta-D-Gal-(1-&gt;4)-beta-D-Xyl}-L-seryl-[protein] + UDP-N-acetyl-alpha-D-galactosamine = 3-O-{[beta-D-GalNAc-(1-&gt;4)-beta-D-GlcA-(1-&gt;3)](n+1)-beta-D-GalNAc-(1-&gt;4)-beta-D-GlcA-(1-&gt;3)-beta-D-Gal-(1-&gt;3)-beta-D-Gal-(1-&gt;4)-beta-D-Xyl}-L-seryl-[protein] + UDP + H(+). The catalysed reaction is 3-O-(beta-D-GalNAc-(1-&gt;4)-beta-D-GlcA-(1-&gt;3)-beta-D-Gal-(1-&gt;3)-beta-D-Gal-(1-&gt;4)-beta-D-Xyl)-L-seryl-[protein] + UDP-alpha-D-glucuronate = 3-O-(beta-D-GlcA-(1-&gt;3)-beta-D-GalNAc-(1-&gt;4)-beta-D-GlcA-(1-&gt;3)-beta-D-Gal-(1-&gt;3)-beta-D-Gal-(1-&gt;4)-beta-D-Xyl)-L-seryl-[protein] + UDP + H(+). It catalyses the reaction 3-O-{[beta-D-GalNAc-(1-&gt;4)-beta-D-GlcA-(1-&gt;3)](n)-beta-D-GalNAc-(1-&gt;4)-beta-D-GlcA-(1-&gt;3)-beta-D-Gal-(1-&gt;3)-beta-D-Gal-(1-&gt;4)-beta-D-Xyl}-L-seryl-[protein] + UDP-alpha-D-glucuronate = 3-O-{beta-D-GlcA-(1-&gt;3)-[beta-D-GalNAc-(1-&gt;4)-beta-D-GlcA-(1-&gt;3)](n)-beta-D-GalNAc-(1-&gt;4)-beta-D-GlcA-(1-&gt;3)-beta-D-Gal-(1-&gt;3)-beta-D-Gal-(1-&gt;4)-beta-D-Xyl}-L-seryl-[protein] + UDP + H(+). In terms of biological role, glycosyltransferase that catalyzes elongation of chondroitin, a polysaccharide composed of a repeating disaccharide of N-acetylgalactosamine (GalNAc) and glucuronic acid (GlcUA) units, by alternatively transferring the GlcUA and GalNAc moiety from UDP-GlcUA and UDP-GalNAc to the non-reducing ends of the chondroitin chain. Each chondroitin unit has the composition beta-(1-&gt;4)-GlcUA-beta-(1-&gt;3)-GalNAc. The polypeptide is Chondroitin synthase (fcbD) (Pasteurella multocida (strain Pm70)).